We begin with the raw amino-acid sequence, 453 residues long: Tryptophan dimethylallyltransferase cnsF (453 aa).

L-tryptophan-binding positions include 84–85 and E93; that span reads IL. 3 residues coordinate substrate: R104, K190, and Y192. Y194 and R248 together coordinate L-tryptophan. R261, K263, Y265, Q347, and Y349 together coordinate substrate.

It belongs to the tryptophan dimethylallyltransferase family. As to quaternary structure, homodimer.

It carries out the reaction L-tryptophan + dimethylallyl diphosphate = 4-(3-methylbut-2-enyl)-L-tryptophan + diphosphate. The protein operates within alkaloid biosynthesis. Its function is as follows. Tryptophan dimethylallyltransferase; part of the gene cluster that mediates the biosynthesis of communesins, a prominent class of indole alkaloids with great potential as pharmaceuticals. Communesins are biosynthesized by the coupling of tryptamine and aurantioclavine, two building blocks derived from L-tryptophan. The L-tryptophan decarboxylase cnsB converts L-tryptophan to tryptamine, whereas the tryptophan dimethylallyltransferase cnsF converts L-tryptophan to 4-dimethylallyl tryptophan which is further transformed to aurantioclavine by the aurantioclavine synthase cnsA, probably aided by the catalase cnsD. The cytochrome P450 monooxygenase cnsC catalyzes the heterodimeric coupling between the two different indole moieties, tryptamine and aurantioclavine, to construct vicinal quaternary stereocenters and yield the heptacyclic communesin scaffold. The O-methyltransferase cnsE then methylates the communesin scaffold to produce communesin K, the simplest characterized communesin that contains the heptacyclic core. The dioxygenase cnsJ converts communesin K into communesin I. Acylation to introduce the hexadienyl group at position N16 of communesin I by the acyltransferase cnsK leads to the production of communesin B. The hexadienyl group is produced by the highly reducing polyketide synthase cnsI, before being hydrolytically removed from cnsI by the serine hydrolase cnsH, converted into hexadienyl-CoA by the CoA ligase cnsG, and then transferred to communesin I by cnsK. Surprisingly, cnsK may also be a promiscuous acyltransferase that can tolerate a range of acyl groups, including acetyl-, propionyl-, and butyryl-CoA, which lead to communesins A, G and H respectively. The roles of the alpha-ketoglutarate-dependent dioxygenases cnsM and cnsP have still to be determined. The protein is Tryptophan dimethylallyltransferase cnsF of Penicillium expansum (Blue mold rot fungus).